Reading from the N-terminus, the 161-residue chain is Endoribonuclease YbeY (161 aa).

Positions 127, 131, and 137 each coordinate Zn(2+).

This sequence belongs to the endoribonuclease YbeY family. It depends on Zn(2+) as a cofactor.

The protein resides in the cytoplasm. In terms of biological role, single strand-specific metallo-endoribonuclease involved in late-stage 70S ribosome quality control and in maturation of the 3' terminus of the 16S rRNA. This is Endoribonuclease YbeY from Listeria innocua serovar 6a (strain ATCC BAA-680 / CLIP 11262).